We begin with the raw amino-acid sequence, 448 residues long: Late embryogenesis abundant protein ECP63 (448 aa).

Basic and acidic residues-rich tracts occupy residues 282-326 (TEEA…EEAG) and 334-354 (QKTR…KDSA). 2 disordered regions span residues 282–360 (TEEA…RGNE) and 411–448 (SKPG…KGKL). A coiled-coil region spans residues 297 to 331 (KENMEKAGEVTRQKMEEMRLEGKELKEEAGAKAQE). A compositionally biased stretch (polar residues) spans 420–432 (LKASDQMTGQTFN). Over residues 435–448 (GRMDDDARKDKGKL) the composition is skewed to basic and acidic residues.

This sequence belongs to the LEA type 4 family. As to expression, expressed in mature seeds.

Functionally, may be involved in the BHLH109-mediated regulation of somatic embryogenesis. This chain is Late embryogenesis abundant protein ECP63, found in Arabidopsis thaliana (Mouse-ear cress).